We begin with the raw amino-acid sequence, 130 residues long: Chemotaxis protein CheY-3 (130 aa).

The Response regulatory domain maps to Lys10–Phe127. Mg(2+) contacts are provided by Asp15, Asp16, Asp60, and Asn62. Asp60 is subject to 4-aspartylphosphate.

As to quaternary structure, interacts with FliM. Requires Mg(2+) as cofactor.

The protein localises to the cytoplasm. Functionally, acts as a response regulator to control chemotaxis. Involved in the transmission of sensory signals from the chemoreceptors to the flagellar motors. Switches the flagellar rotation by binding to the flagellar motor switch protein FliM. In its active (phosphorylated or acetylated) form, exhibits enhanced binding to a switch component, FliM, at the flagellar motor which induces a change from counterclockwise to clockwise flagellar rotation. The sequence is that of Chemotaxis protein CheY-3 from Vibrio cholerae serotype O1 (strain ATCC 39315 / El Tor Inaba N16961).